The following is a 490-amino-acid chain: 4-hydroxybutyryl-CoA dehydratase/vinylacetyl-CoA-Delta-isomerase (490 aa).

Residues cysteine 99 and cysteine 103 each coordinate [4Fe-4S] cluster. FAD contacts are provided by residues 149–156 and 188–190; these read MTDPKGDR and HQT. [4Fe-4S] cluster-binding residues include histidine 292 and cysteine 299. Residues histidine 325 and 386–390 each bind FAD; that span reads DIAGG.

In terms of assembly, homotetramer. Requires FAD as cofactor. It depends on [4Fe-4S] cluster as a cofactor.

It catalyses the reaction 4-hydroxybutanoyl-CoA = (2E)-butenoyl-CoA + H2O. The enzyme catalyses vinylacetyl-CoA = (2E)-butenoyl-CoA. Catalyzes the reversible conversion of 4-hydroxybutyryl-CoA to crotonyl-CoA. The mechanism of the reaction seems to go through three steps: (1) the FAD-dependent oxidation of 4-hydroxybutyryl-CoA to 4-hydroxycrotonyl-CoA; (2) the hydroxyl group is substituted by a hydride derived from the now reduced FAD in an SN2' reaction leading to vinylacetyl-CoA; (3) isomerization to yield crotonyl-CoA. The chain is 4-hydroxybutyryl-CoA dehydratase/vinylacetyl-CoA-Delta-isomerase (abfD) from Clostridium aminobutyricum.